The sequence spans 266 residues: Hemin import ATP-binding protein HmuV (266 aa).

Residues 12–248 enclose the ABC transporter domain; that stretch reads LEASHLHYHV…ETLTQWYQAD (237 aa). Residue 44 to 51 coordinates ATP; sequence GPNGAGKS.

This sequence belongs to the ABC transporter superfamily. Heme (hemin) importer (TC 3.A.1.14.5) family. In terms of assembly, the complex is composed of two ATP-binding proteins (HmuV), two transmembrane proteins (HmuU) and a solute-binding protein (HmuT).

The protein localises to the cell inner membrane. Part of the ABC transporter complex HmuTUV involved in hemin import. Responsible for energy coupling to the transport system. This Yersinia pestis bv. Antiqua (strain Antiqua) protein is Hemin import ATP-binding protein HmuV.